A 648-amino-acid chain; its full sequence is Mitochondrial Rho GTPase 1 (648 aa).

The Cytoplasmic segment spans residues 1–619 (MARYAAGAVD…KHYNRLINRS (619 aa)). The residue at position 14 (serine 14) is a Phosphoserine. The region spanning 15-182 (PKSVRIVVVG…FYYAQKTVLH (168 aa)) is the Miro 1 domain. 2 consecutive EF-hand domains span residues 198–233 (RCVR…CFHA) and 319–354 (AAID…APES). Residues aspartate 211, aspartate 213, aspartate 215, glutamate 222, aspartate 332, aspartate 334, aspartate 336, asparagine 338, and glutamate 343 each coordinate Ca(2+). One can recognise a Miro 2 domain in the interval 427–595 (RKVFQCFVFG…FRKILTAAQH (169 aa)). The chain crosses the membrane as a helical span at residues 620–640 (LMAVSIGAAAVVVGLAAYRVY). Over 641–648 (ATRKSSSA) the chain is Mitochondrial intermembrane.

The protein belongs to the mitochondrial Rho GTPase family. Expressed in roots, leaves, stems, flowers and siliques.

It localises to the mitochondrion outer membrane. Functionally, mitochondrial GTPase required to maintain proper development, morphology and intracellular distribution of mitochondria, which in turn are essential for the progress of embryonic cell division, development of haploid male and female gametes, and pollen tube growth. In Arabidopsis thaliana (Mouse-ear cress), this protein is Mitochondrial Rho GTPase 1.